A 500-amino-acid polypeptide reads, in one-letter code: Melanopsin (500 aa).

The Extracellular segment spans residues 1 to 65; it reads MSHHSSWRGH…TVDVPDHAHY (65 aa). N-linked (GlcNAc...) asparagine glycosylation occurs at Asn-18. Residues 66-86 form a helical membrane-spanning segment; it reads IIGAVILIVGITGVIGNALVI. Residues 87–101 lie on the Cytoplasmic side of the membrane; that stretch reads YVFCRSRTLRTAGNM. A helical membrane pass occupies residues 102 to 122; it reads FVVNLAVADFFMSLTQSPVFF. Residues 123 to 138 lie on the Extracellular side of the membrane; it reads AASLHRRWIFGERICE. An intrachain disulfide couples Cys-137 to Cys-215. Residues 139 to 159 form a helical membrane-spanning segment; sequence LYAFCGALFGICSMMTLTAIA. The Cytoplasmic portion of the chain corresponds to 160-182; sequence ADRCLAITQPLALVGNVSRRKAG. A helical membrane pass occupies residues 183 to 203; the sequence is AVLAVVWLYSLGWSLPPFFGW. Topologically, residues 204–232 are extracellular; that stretch reads SAYVPEGLQTSCSWDYMTFTPSVRAYTIL. The helical transmembrane segment at 233–253 threads the bilayer; that stretch reads LFIFVFFIPLGIIVSCYVGIF. The Cytoplasmic segment spans residues 254 to 286; the sequence is QAIRAMGKEIRELDCGETQKVYERMQNEWKMAK. Residues 287 to 307 form a helical membrane-spanning segment; sequence IALLVILLFVISWSPYSVVAL. The Extracellular portion of the chain corresponds to 308 to 322; it reads TATAGYSHLLTPYMN. The helical transmembrane segment at 323–343 threads the bilayer; that stretch reads SVPAVIAKASAIHNPIIYAIT. The residue at position 330 (Lys-330) is an N6-(retinylidene)lysine. At 344–500 the chain is on the cytoplasmic side; the sequence is HPKYRAAIAR…DGKALLLGGN (157 aa). Disordered stretches follow at residues 406–428, 448–470, and 481–500; these read GKKR…ADGS, VILS…AHKV, and ETDS…LGGN. 2 stretches are compositionally biased toward polar residues: residues 411–428 and 448–462; these read SSAS…ADGS and VILS…ASGQ.

Belongs to the G-protein coupled receptor 1 family. Opsin subfamily. As to expression, expressed in a subset of retinal horizontal cells as well as in retinal ganglion cells.

It is found in the cell membrane. Photoreceptor implicated in non-image-forming responses to light. This chain is Melanopsin (opn4), found in Rutilus rutilus (Roach).